The following is a 345-amino-acid chain: Selenide, water dikinase (345 aa).

Cys-16 is a catalytic residue. ATP is bound by residues Lys-19 and 46–48; that span reads TSD. Asp-49 provides a ligand contact to Mg(2+). ATP contacts are provided by residues Asp-66, Asp-89, and 136–138; that span reads GHT. Mg(2+) is bound at residue Asp-89. Mg(2+) is bound at residue Asp-224.

The protein belongs to the selenophosphate synthase 1 family. Class I subfamily. In terms of assembly, homodimer. Mg(2+) serves as cofactor.

It catalyses the reaction hydrogenselenide + ATP + H2O = selenophosphate + AMP + phosphate + 2 H(+). Synthesizes selenophosphate from selenide and ATP. The polypeptide is Selenide, water dikinase (Clostridium botulinum (strain Alaska E43 / Type E3)).